The sequence spans 247 residues: Homeobox protein BarH-like 1b (247 aa).

Disordered regions lie at residues 118–138 (RGKL…GRRS) and 197–247 (GGGL…SQEE). The homeobox DNA-binding region spans 135 to 194 (GRRSRTVFTELQLMGLEKRFEKQKYLSTPDRIDLAESLGLSQLQVKTWYQNRRMKWKKIV). A compositionally biased stretch (basic and acidic residues) spans 223–234 (EQERARDAEKPP).

It belongs to the BAR homeobox family. Interacts with serum response factor (SRF). In terms of tissue distribution, expressed in smooth muscle cells of the upper digestive organs and their attached arteries and to craniofacial structures.

The protein localises to the nucleus. Its function is as follows. Transcription factor which is involved with the serum response factor (SRF) in the smooth muscle cell-specific transcription of the beta-tropomyosin gene in the upper digestive organs and their attached arteries. This is Homeobox protein BarH-like 1b (BARX1B) from Gallus gallus (Chicken).